The sequence spans 546 residues: Chaperonin GroEL (546 aa).

Residues 29 to 32 (TLGP), K50, 86 to 90 (DGTTT), G414, 477 to 479 (NAL), and D493 each bind ATP. The tract at residues 522–546 (KPEKDAPNPMAGMGGGGMGGMGGMM) is disordered. The segment covering 533–546 (GMGGGGMGGMGGMM) has biased composition (gly residues).

It belongs to the chaperonin (HSP60) family. In terms of assembly, forms a cylinder of 14 subunits composed of two heptameric rings stacked back-to-back. Interacts with the co-chaperonin GroES.

It localises to the cytoplasm. It catalyses the reaction ATP + H2O + a folded polypeptide = ADP + phosphate + an unfolded polypeptide.. In terms of biological role, together with its co-chaperonin GroES, plays an essential role in assisting protein folding. The GroEL-GroES system forms a nano-cage that allows encapsulation of the non-native substrate proteins and provides a physical environment optimized to promote and accelerate protein folding. This is Chaperonin GroEL from Leptospira borgpetersenii serovar Hardjo-bovis (strain JB197).